The sequence spans 103 residues: N(4)-acetylcytidine amidohydrolase (103 aa).

The 87-residue stretch at 6 to 92 (TFFERFEQDI…VIQEIYPGLE (87 aa)) folds into the ASCH domain. The Proton acceptor role is filled by lysine 20. The Nucleophile role is filled by threonine 23. Residue glutamate 73 is the Proton donor of the active site.

The protein belongs to the N(4)-acetylcytidine amidohydrolase family.

It catalyses the reaction N(4)-acetylcytidine + H2O = cytidine + acetate + H(+). The enzyme catalyses N(4)-acetyl-2'-deoxycytidine + H2O = 2'-deoxycytidine + acetate + H(+). It carries out the reaction N(4)-acetylcytosine + H2O = cytosine + acetate + H(+). Its function is as follows. Catalyzes the hydrolysis of N(4)-acetylcytidine (ac4C). This Shewanella sp. (strain MR-4) protein is N(4)-acetylcytidine amidohydrolase.